We begin with the raw amino-acid sequence, 425 residues long: Histone-binding protein RBBP4 (425 aa).

N-acetylalanine is present on alanine 2. WD repeat units follow at residues 32–125, 126–175, 176–223, 225–270, 271–314, 315–371, and 372–404; these read YDLV…NHEG, EVNR…RLRG, HQKE…KTIF, GHTA…HSVD, AHTA…HSFE, SHKD…FIHG, and GHTA…VWQM. Residues 361-406 are interaction with HAT1; the sequence is DGPPELLFIHGGHTAKISDFSWNPNEPWVICSVSEDNIMQVWQMAE.

Belongs to the WD repeat RBAP46/RBAP48/MSI1 family. In terms of assembly, binds directly to histone H4, probably via helix 1 of the histone fold, a region that is not accessible when histone H4 is in chromatin. Interacts with CHAF1A, HDAC1, HDAC2, HDAC3 and HIRA. May also interact with HAT1.

It is found in the nucleus. Its subcellular location is the chromosome. The protein resides in the telomere. Core histone-binding subunit that may target chromatin assembly factors, chromatin remodeling factors and histone deacetylases to their histone substrates in a manner that is regulated by nucleosomal DNA. Component of several complexes which regulate chromatin metabolism. The sequence is that of Histone-binding protein RBBP4 (RBBP4) from Gallus gallus (Chicken).